The following is a 503-amino-acid chain: Catalase (503 aa).

Residues 1 to 26 (MAKDDKRLTGLFGHPVSDRENSMTAG) form a disordered region. Active-site residues include His56 and Asn129. A heme-binding site is contributed by Tyr339.

It belongs to the catalase family. Homodimer. Requires heme as cofactor.

The enzyme catalyses 2 H2O2 = O2 + 2 H2O. Its function is as follows. Decomposes hydrogen peroxide into water and oxygen; serves to protect cells from the toxic effects of hydrogen peroxide. This chain is Catalase (katA), found in Staphylococcus haemolyticus (strain JCSC1435).